The chain runs to 387 residues: 3-ketoacyl-CoA thiolase (387 aa).

Cys-91 acts as the Acyl-thioester intermediate in catalysis. Catalysis depends on proton acceptor residues His-343 and Cys-373.

Belongs to the thiolase-like superfamily. Thiolase family. Heterotetramer of two alpha chains (FadB) and two beta chains (FadA).

The protein localises to the cytoplasm. It carries out the reaction an acyl-CoA + acetyl-CoA = a 3-oxoacyl-CoA + CoA. The protein operates within lipid metabolism; fatty acid beta-oxidation. In terms of biological role, catalyzes the final step of fatty acid oxidation in which acetyl-CoA is released and the CoA ester of a fatty acid two carbons shorter is formed. In Shigella dysenteriae serotype 1 (strain Sd197), this protein is 3-ketoacyl-CoA thiolase.